A 511-amino-acid chain; its full sequence is MSVTQKKTEISTTTTYEGESRPSSGMSGFSYSAKIHPRTSGYINRSSQSPFRSSMGSNAAYTRSYDFSYGATAMPGRYANISSTGVNHVKANREREKQDMRDLNERFANYIEKVRFLEAQNKKLAGELEELKSKWGKETSAIKEMYETELEEARKLIDATNKEKITLDVRVTELIDQLERQQKDLEESRTYHQIDQEQIARQNQQLADLEGEISMLRRSIESLEKEKMRQSNILAKMNDEMEKMRMDLNNETINHLDAENRRQTLEEELEFQKDVHAQELKELAALAYRDTTAENREFWRNELAQAIRDIQQEYDAKCDQMRGDIEAYYNLKVQEFRTGATKQNMEVTRNKEENTKLKSNMTEIRNRLADLEARNAQLERTNQDLLRDLEEKDRQNELESCQYKEEITKLRGEMESILKELQDLMDIKLSLELEIAAYRKLLEGEESRVGMKQIVEQVVGARPNEAEVLSTILTRSEGGYEATGGITTTTTTSSQERRSMSEEKKSMGSSD.

Positions Met-1–Ser-32 are disordered. The segment at Met-1–Asp-99 is head. The segment covering Arg-21–Ser-30 has biased composition (polar residues). The region spanning Glu-96–Val-449 is the IF rod domain. The tract at residues Met-100–Trp-135 is coil 1A. Residues Gly-136–Met-145 are linker 1. The coil 1B stretch occupies residues Tyr-146–Ala-284. Residues Ala-285–Leu-303 form a linker 12 region. The tract at residues Ala-304–Val-449 is coil 2. The tract at residues Gly-450–Asp-511 is tail. The segment at Gly-479–Asp-511 is disordered. The segment covering Thr-483 to Thr-492 has biased composition (low complexity). Over residues Gln-495–Asp-511 the composition is skewed to basic and acidic residues.

It belongs to the intermediate filament family.

Its function is as follows. Major squid neurofilament protein. The protein is 60 kDa neurofilament protein of Doryteuthis pealeii (Longfin inshore squid).